Reading from the N-terminus, the 65-residue chain is Conotoxin Cal1.5 (65 aa).

The N-terminal stretch at 1–18 is a signal peptide; sequence MRCLPVFIILLLLASTAA. Residues 19-49 constitute a propeptide that is removed on maturation; sequence VDVAGSKLKRRLERKPYQGSQAYVKKTAFGL. 2 disulfide bridges follow: Cys-52/Cys-62 and Cys-53/Cys-59. Pro-61 is subject to 4-hydroxyproline.

Belongs to the conotoxin T superfamily. In terms of tissue distribution, expressed by the venom duct.

Its subcellular location is the secreted. Functionally, probable neurotoxin with unknown target. Possibly targets ion channels. The polypeptide is Conotoxin Cal1.5 (Californiconus californicus (California cone)).